A 91-amino-acid chain; its full sequence is Probable Fe(2+)-trafficking protein (91 aa).

It belongs to the Fe(2+)-trafficking protein family.

Its function is as follows. Could be a mediator in iron transactions between iron acquisition and iron-requiring processes, such as synthesis and/or repair of Fe-S clusters in biosynthetic enzymes. The sequence is that of Probable Fe(2+)-trafficking protein from Paraburkholderia phytofirmans (strain DSM 17436 / LMG 22146 / PsJN) (Burkholderia phytofirmans).